We begin with the raw amino-acid sequence, 417 residues long: Odorant receptor 65a (417 aa).

Residues 1 to 62 (MTELRSERKN…MNSEQRRLPR (62 aa)) are Cytoplasmic-facing. Residues 63–83 (IVAWQYFVSIQLATALASLFY) traverse the membrane as a helical segment. The Extracellular segment spans residues 84–98 (GISESIGDIVNLGRD). A helical membrane pass occupies residues 99–119 (LVFIITIIFICFRLVFFAQYA). Residues 120-152 (GELDVIIDALEDIYHWSIKGPATKEVQETKRLH) lie on the Cytoplasmic side of the membrane. A helical membrane pass occupies residues 153-173 (FLLFMALIITWFSFLILFMLI). Over 174 to 206 (KISTPFWIESQTLPFHVSWPFQLHDPSKHPIAY) the chain is Extracellular. Residues 207-227 (IIIFVSQSTTMLYFLIWLGVV) form a helical membrane-spanning segment. Residues 228–290 (ENMGVSLFFE…TDRCNHIFNG (63 aa)) lie on the Cytoplasmic side of the membrane. The chain crosses the membrane as a helical span at residues 291–311 (AFIMQMLINFLLVSLSLFEVL). At 312–316 (AAKKN) the chain is on the extracellular side. The helical transmembrane segment at 317–337 (PQVAVEYMIIMLMTLGHLSFW) threads the bilayer. The Cytoplasmic segment spans residues 338–393 (SKFGDMFSKESEQVALAVYEAYDPNVGSKSIHRQFCFFIQRAQKPLIMKASPFPPF). A helical transmembrane segment spans residues 394–414 (NLENYMFILKQCYSILTILAN). At 415–417 (TLE) the chain is on the extracellular side.

Belongs to the insect chemoreceptor superfamily. Heteromeric odorant receptor channel (TC 1.A.69) family. Or49a subfamily. As to quaternary structure, interacts with Orco. Complexes exist early in the endomembrane system in olfactory sensory neurons (OSNs), coupling these complexes to the conserved ciliary trafficking pathway. In terms of tissue distribution, expressed in olfactory sensory neurons in the antenna.

It is found in the cell membrane. Odorant receptor which mediates acceptance or avoidance behavior, depending on its substrates. The odorant receptor repertoire encodes a large collection of odor stimuli that vary widely in identity, intensity, and duration. May form a complex with Orco to form odorant-sensing units, providing sensitive and prolonged odorant signaling and calcium permeability. Involved in olfactory communication for modulating aggression through the sensing of the male-specific pheromone 11-cis-vaccenyl acetate (cVA). Although acute exposure to cVA elicites aggression through Or67d olfactory receptor neurons (ORNs), chronic cVA exposure reduces aggression through Or65a ORNs. Moreover, cVA leads to generalized learning with mated females. It is a major component of the male cuticular hydrocarbon profile, but it is not found on virgin females. During copulation, cVA is transferred to the female in ejaculate along with sperm and peptides that decrease her sexual receptivity. The protein is Odorant receptor 65a (Or65a) of Drosophila melanogaster (Fruit fly).